The sequence spans 273 residues: Pantothenate synthetase (273 aa).

An ATP-binding site is contributed by 27 to 34; the sequence is MGALHQGH. His34 acts as the Proton donor in catalysis. Gln58 contacts (R)-pantoate. Residue Gln58 coordinates beta-alanine. Residue 144 to 147 participates in ATP binding; sequence GKKD. Gln150 contributes to the (R)-pantoate binding site. Residues Val173 and 181 to 184 contribute to the ATP site; that span reads LSSR.

The protein belongs to the pantothenate synthetase family. As to quaternary structure, homodimer.

It localises to the cytoplasm. It catalyses the reaction (R)-pantoate + beta-alanine + ATP = (R)-pantothenate + AMP + diphosphate + H(+). The protein operates within cofactor biosynthesis; (R)-pantothenate biosynthesis; (R)-pantothenate from (R)-pantoate and beta-alanine: step 1/1. Its function is as follows. Catalyzes the condensation of pantoate with beta-alanine in an ATP-dependent reaction via a pantoyl-adenylate intermediate. This chain is Pantothenate synthetase, found in Nitratiruptor sp. (strain SB155-2).